The following is a 237-amino-acid chain: Carboxy-S-adenosyl-L-methionine synthase (237 aa).

S-adenosyl-L-methionine-binding positions include Y40, 65-67 (GCS), 116-117 (DI), N131, and R194.

Belongs to the class I-like SAM-binding methyltransferase superfamily. Cx-SAM synthase family. In terms of assembly, homodimer.

It carries out the reaction prephenate + S-adenosyl-L-methionine = carboxy-S-adenosyl-L-methionine + 3-phenylpyruvate + H2O. In terms of biological role, catalyzes the conversion of S-adenosyl-L-methionine (SAM) to carboxy-S-adenosyl-L-methionine (Cx-SAM). This chain is Carboxy-S-adenosyl-L-methionine synthase, found in Dichelobacter nodosus (strain VCS1703A).